The following is a 282-amino-acid chain: NAC domain-containing protein 1 (282 aa).

The region spanning L9–K161 is the NAC domain. Residues V106–T167 mediate DNA binding. The stretch at K161–N188 forms a coiled coil.

As to expression, expressed in roots, stem, flowers, and leaves.

It localises to the nucleus. Functionally, transcription factor that binds DNA motifs 5'-CGT[AG](5N)NACG[ACT][AC][AT][ACG][ACT]-3' and 5'-CACG[ACT][AC][AT][AGT][CT]-3' in target genes promoters. Promotes leaf senescence and reduces fruit yield and sugar content, probably by establishing abscisic acid (ABA) homeostasis. This is NAC domain-containing protein 1 from Solanum lycopersicum (Tomato).